Reading from the N-terminus, the 246-residue chain is Isoprenyl transferase (246 aa).

Residue D18 is part of the active site. D18 contacts Mg(2+). Residues 19–22, W23, R31, H35, and 63–65 contribute to the substrate site; these read GNGR and SAE. N66 functions as the Proton acceptor in the catalytic mechanism. Substrate contacts are provided by residues W67, R69, R186, and 192-194; that span reads RIS. E205 contacts Mg(2+).

It belongs to the UPP synthase family. As to quaternary structure, homodimer. Mg(2+) serves as cofactor.

Functionally, catalyzes the condensation of isopentenyl diphosphate (IPP) with allylic pyrophosphates generating different type of terpenoids. The chain is Isoprenyl transferase from Geobacter sulfurreducens (strain ATCC 51573 / DSM 12127 / PCA).